The chain runs to 93 residues: Small ribosomal subunit protein uS19 (93 aa).

This sequence belongs to the universal ribosomal protein uS19 family.

Functionally, protein S19 forms a complex with S13 that binds strongly to the 16S ribosomal RNA. This Synechococcus sp. (strain JA-2-3B'a(2-13)) (Cyanobacteria bacterium Yellowstone B-Prime) protein is Small ribosomal subunit protein uS19.